The sequence spans 84 residues: Large ribosomal subunit protein bL31B-2 (84 aa).

The protein belongs to the bacterial ribosomal protein bL31 family. Type B subfamily. In terms of assembly, part of the 50S ribosomal subunit.

The protein is Large ribosomal subunit protein bL31B-2 of Streptomyces coelicolor (strain ATCC BAA-471 / A3(2) / M145).